A 369-amino-acid polypeptide reads, in one-letter code: uncharacterized protein (369 aa).

A run of 9 helical transmembrane segments spans residues glutamine 25 to tryptophan 45, phenylalanine 47 to glutamate 67, leucine 119 to methionine 139, isoleucine 152 to leucine 172, glycine 206 to isoleucine 226, leucine 235 to leucine 255, leucine 268 to isoleucine 288, leucine 295 to phenylalanine 315, and tryptophan 323 to phenylalanine 343.

The protein to B.subtilis ComEC.

The protein resides in the cell membrane. This is an uncharacterized protein from Mycoplasma pneumoniae (strain ATCC 29342 / M129 / Subtype 1) (Mycoplasmoides pneumoniae).